Consider the following 365-residue polypeptide: UDP-N-acetylglucosamine--N-acetylmuramyl-(pentapeptide) pyrophosphoryl-undecaprenol N-acetylglucosamine transferase (365 aa).

Residues 19 to 21, Asn131, Arg170, Ser201, Ile255, 274 to 279, and Gln300 each bind UDP-N-acetyl-alpha-D-glucosamine; these read TGG and ALTVTE.

The protein belongs to the glycosyltransferase 28 family. MurG subfamily.

Its subcellular location is the cell inner membrane. The enzyme catalyses di-trans,octa-cis-undecaprenyl diphospho-N-acetyl-alpha-D-muramoyl-L-alanyl-D-glutamyl-meso-2,6-diaminopimeloyl-D-alanyl-D-alanine + UDP-N-acetyl-alpha-D-glucosamine = di-trans,octa-cis-undecaprenyl diphospho-[N-acetyl-alpha-D-glucosaminyl-(1-&gt;4)]-N-acetyl-alpha-D-muramoyl-L-alanyl-D-glutamyl-meso-2,6-diaminopimeloyl-D-alanyl-D-alanine + UDP + H(+). It functions in the pathway cell wall biogenesis; peptidoglycan biosynthesis. Functionally, cell wall formation. Catalyzes the transfer of a GlcNAc subunit on undecaprenyl-pyrophosphoryl-MurNAc-pentapeptide (lipid intermediate I) to form undecaprenyl-pyrophosphoryl-MurNAc-(pentapeptide)GlcNAc (lipid intermediate II). The chain is UDP-N-acetylglucosamine--N-acetylmuramyl-(pentapeptide) pyrophosphoryl-undecaprenol N-acetylglucosamine transferase from Acinetobacter baumannii (strain SDF).